Here is a 648-residue protein sequence, read N- to C-terminus: Pumilio homolog 3 (648 aa).

The tract at residues Met-1–Arg-124 is disordered. Over residues Ala-17–Ser-27 the composition is skewed to basic and acidic residues. An N6-acetyllysine modification is found at Lys-33. Basic residues predominate over residues Leu-60 to Lys-69. Residues Phe-94–Arg-124 show a composition bias toward basic and acidic residues. The short motif at Lys-106–Lys-118 is the Nuclear localization signal element. The 368-residue stretch at Glu-143–Leu-510 folds into the PUM-HD domain. Pumilio repeat units follow at residues His-177–Ala-212, Lys-213–His-248, Ala-249–Gly-277, Arg-289–His-325, Ser-326–Thr-361, His-362–Gly-397, Gln-398–Asp-435, Lys-436–Asp-504, Lys-505–His-551, Pro-552–Val-596, and Asn-597–Ser-636. The segment at Arg-289–Val-297 is HA-8.

In terms of assembly, interacts with PARP1 (via catalytic domain). Widely expressed.

The protein resides in the nucleus. It is found in the nucleolus. The protein localises to the nucleoplasm. It localises to the chromosome. Functionally, inhibits the poly(ADP-ribosyl)ation activity of PARP1 and the degradation of PARP1 by CASP3 following genotoxic stress. Binds to double-stranded RNA or DNA without sequence specificity. Involved in development of the eye and of primordial germ cells. In Homo sapiens (Human), this protein is Pumilio homolog 3.